Here is a 704-residue protein sequence, read N- to C-terminus: Polyribonucleotide nucleotidyltransferase (704 aa).

Residues Asp487 and Asp493 each contribute to the Mg(2+) site. The 60-residue stretch at 554–613 folds into the KH domain; that stretch reads PRLLTIKIHPDKIREVIGKGGSTIQAITKETGTQIDIQDDGTIIIASVNAIAAQAAKSRI. The S1 motif domain maps to 623-691; the sequence is GRIYEGKVAK…KQGRIRLSIK (69 aa).

This sequence belongs to the polyribonucleotide nucleotidyltransferase family. In terms of assembly, component of the RNA degradosome, which is a multiprotein complex involved in RNA processing and mRNA degradation. The cofactor is Mg(2+).

Its subcellular location is the cytoplasm. It carries out the reaction RNA(n+1) + phosphate = RNA(n) + a ribonucleoside 5'-diphosphate. Involved in mRNA degradation. Catalyzes the phosphorolysis of single-stranded polyribonucleotides processively in the 3'- to 5'-direction. The chain is Polyribonucleotide nucleotidyltransferase from Xanthomonas axonopodis pv. citri (strain 306).